A 695-amino-acid polypeptide reads, in one-letter code: UvrABC system protein B (695 aa).

Residues Glu-45–Thr-434 form the Helicase ATP-binding domain. Gly-58 to Thr-65 is a binding site for ATP. Positions Tyr-111–Ile-134 match the Beta-hairpin motif. The 154-residue stretch at Gln-449–Ile-602 folds into the Helicase C-terminal domain. Residues Ser-646–Gln-681 enclose the UVR domain.

It belongs to the UvrB family. In terms of assembly, forms a heterotetramer with UvrA during the search for lesions. Interacts with UvrC in an incision complex.

Its subcellular location is the cytoplasm. Its function is as follows. The UvrABC repair system catalyzes the recognition and processing of DNA lesions. A damage recognition complex composed of 2 UvrA and 2 UvrB subunits scans DNA for abnormalities. Upon binding of the UvrA(2)B(2) complex to a putative damaged site, the DNA wraps around one UvrB monomer. DNA wrap is dependent on ATP binding by UvrB and probably causes local melting of the DNA helix, facilitating insertion of UvrB beta-hairpin between the DNA strands. Then UvrB probes one DNA strand for the presence of a lesion. If a lesion is found the UvrA subunits dissociate and the UvrB-DNA preincision complex is formed. This complex is subsequently bound by UvrC and the second UvrB is released. If no lesion is found, the DNA wraps around the other UvrB subunit that will check the other stand for damage. This Cupriavidus pinatubonensis (strain JMP 134 / LMG 1197) (Cupriavidus necator (strain JMP 134)) protein is UvrABC system protein B.